Consider the following 884-residue polypeptide: Probable ribonuclease ZC3H12C (884 aa).

Residues 66–108 are disordered; the sequence is KPTMDTVNSGKEGKGVSEENVSSGDSEGSTSSDHESEQLSSLS. The segment covering 87-96 has biased composition (low complexity); that stretch reads SSGDSEGSTS. Serine 231 is modified (phosphoserine). The RNase NYN domain occupies 246–401; sequence LRPVVIDGSN…LGRHGPSLDN (156 aa). A C3H1-type zinc finger spans residues 411–436; it reads EHKKQPCPYGKKCTYGHKCKYYHPER. Polar residues predominate over residues 456-478; the sequence is AAKTTNEGGLVKSNSVPCSTKAD. Disordered stretches follow at residues 456–548, 716–739, and 755–776; these read AAKT…SGVH, VGAR…KAPH, and SRLY…EGLG. Over residues 500 to 516 the composition is skewed to basic and acidic residues; that stretch reads VYQDIEEKLPTKNKLET. The segment covering 518–543 has biased composition (polar residues); sequence SVPSLVSIPATSTAKPQSTTPLSNGL.

Belongs to the ZC3H12 family. The cofactor is Mg(2+).

Functionally, may function as RNase and regulate the levels of target RNA species. This chain is Probable ribonuclease ZC3H12C (Zc3h12c), found in Mus musculus (Mouse).